Here is a 1240-residue protein sequence, read N- to C-terminus: Neurofascin (1240 aa).

A signal peptide spans 1–24 (MARQQAPPWVHIALILFLLSLGGA). The Extracellular segment spans residues 25–1110 (IEIPMDPSIQ…NQADIATQGW (1086 aa)). 6 consecutive Ig-like C2-type domains span residues 41–137 (PTIT…LQVS), 143–230 (PKEN…NPFT), 244–332 (PSFM…ISVR), 337–424 (PYWL…AFVS), 430–517 (PRML…VRLE), and 521–603 (PTRI…QDLA). Disulfide bonds link C63-C118, C162-C213, C268-C316, and C358-C408. N-linked (GlcNAc...) asparagine glycosylation occurs at N305. 2 N-linked (GlcNAc...) asparagine glycosylation sites follow: N409 and N446. 2 cysteine pairs are disulfide-bonded: C452/C501 and C543/C592. Phosphotyrosine is present on Y481. N483 carries an N-linked (GlcNAc...) asparagine glycan. S485 carries the phosphoserine modification. Fibronectin type-III domains lie at 630 to 725 (RPRD…TSGA), 727 to 823 (PESN…SGED), 827 to 923 (APRR…PNEA), and 1007 to 1099 (APDE…TAYT). Positions 710 to 740 (SSHPSLPSERYRTSGAPPESNPSDVKGEGTR) are disordered. N-linked (GlcNAc...) asparagine glycosylation is found at N752, N778, N866, and N881. The segment at 902–942 (ARTQVGSGEAATEESPAPPNEATPTAAPPTLPPTTVGTTGL) is disordered. Positions 907-916 (GSGEAATEES) are enriched in low complexity. Pro residues predominate over residues 917–933 (PAPPNEATPTAAPPTLP). The chain crosses the membrane as a helical span at residues 1111–1131 (FIGLMCAIALLVLILLIVCFI). The Cytoplasmic segment spans residues 1132–1240 (KRSRGGKYPV…SPVNAIYSLA (109 aa)). The tract at residues 1141-1240 (VREKKDVPLG…SPVNAIYSLA (100 aa)) is disordered. The segment covering 1154–1165 (PKEEDGSFDYSD) has biased composition (acidic residues). Phosphoserine is present on residues S1160, S1174, S1187, S1190, S1226, S1227, and S1231. The span at 1171–1184 (LQGSQTSLDGTIKQ) shows a compositional bias: polar residues.

Belongs to the immunoglobulin superfamily. L1/neurofascin/NgCAM family. As to quaternary structure, horseshoe-shaped homodimer. Probable constituent of a NFASC/NRCAM/ankyrin-G complex. Associates with the sodium channel beta-1 (SCN1B) and beta-3 (SCN3B) subunits. Interacts with GLDN/gliomedin. Interacts with MYOC.

It is found in the cell membrane. Functionally, cell adhesion, ankyrin-binding protein which may be involved in neurite extension, axonal guidance, synaptogenesis, myelination and neuron-glial cell interactions. The polypeptide is Neurofascin (Nfasc) (Mus musculus (Mouse)).